The primary structure comprises 269 residues: Type II iodothyronine deiodinase (269 aa).

The Lumenal segment spans residues Met-1 to Leu-9. The helical; Signal-anchor for type III membrane protein transmembrane segment at Ile-10–Leu-34 threads the bilayer. The Cytoplasmic portion of the chain corresponds to Lys-35–Asp-269. A disordered region spans residues Asn-83–Gln-103. Residue Sec-133 is part of the active site. Non-standard amino acids (selenocysteine) are located at Sec-133 and Sec-266.

The protein belongs to the iodothyronine deiodinase family. Predominantly monomer. Can form homodimers but homodimerization is not essential for enzyme activity. Interacts with USP20 and USP33. Interacts with MARCHF6. In terms of processing, ubiquitinated by MARCHF6, leading to its degradation by the proteasome. Deubiquitinated by USP20 and USP33. As to expression, highly expressed in thyroid, mammary and pituitary glands, then in hypothalamus. Low levels detected in diaphragm, heart, kidney and lung.

The protein localises to the endoplasmic reticulum membrane. The enzyme catalyses 3,3',5-triiodo-L-thyronine + iodide + A + H(+) = L-thyroxine + AH2. It carries out the reaction 3,3'-diiodo-L-thyronine + iodide + A + H(+) = 3,3',5'-triiodo-L-thyronine + AH2. It catalyses the reaction 3'-iodo-L-thyronine + iodide + A + H(+) = 3',5'-diiodo-L-thyronine + AH2. The catalysed reaction is 3,3'-diiodothyronamine + iodide + A + H(+) = 3,3',5'-triiodothyronamine + AH2. The enzyme catalyses 3'-iodothyronamine + iodide + A + H(+) = 3',5'-diiodothyronamine + AH2. Its function is as follows. Plays a crucial role in the metabolism of thyroid hormones (TH) and has specific roles in TH activation and inactivation by deiodination. Catalyzes the deiodination of L-thyroxine (T4) to 3,5,3'-triiodothyronine (T3), 3,3',5'-triiodothyronine (rT3) to 3,3'-diiodothyronine (3,3'-T2) and 3',5'-diiodothyronine (3',5'-T2) to 3'-monoiodothyronine (3'-T1) via outer-ring deiodination (ORD). Catalyzes the phenolic ring deiodinations of 3,3',5'-triiodothyronamine and 3',5'- diiodothyronamine. The protein is Type II iodothyronine deiodinase (DIO2) of Bos taurus (Bovine).